The primary structure comprises 309 residues: Wnt inhibitor of Dorsal protein (309 aa).

The signal sequence occupies residues 1 to 16; that stretch reads MIFAITFFMGITSTLA. 10 cysteine pairs are disulfide-bonded: Cys51/Cys62, Cys102/Cys110, Cys112/Cys121, Cys162/Cys179, Cys164/Cys174, Cys232/Cys269, Cys248/Cys262, Cys266/Cys308, Cys284/Cys299, and Cys286/Cys296.

Belongs to the Wnt family.

The protein localises to the secreted. It is found in the extracellular space. Its subcellular location is the extracellular matrix. Binds as a ligand to a family of frizzled seven-transmembrane receptors and acts through a cascade of genes on the nucleus. The protein is Wnt inhibitor of Dorsal protein (wntD) of Drosophila melanogaster (Fruit fly).